Consider the following 734-residue polypeptide: Paralemmin-3 (734 aa).

The stretch at 19-64 (SALYRQRLEVIAEKRRLQEEIGAARRELEEEKLRVERLKRKSLRER) forms a coiled coil. 2 disordered regions span residues 62–100 (RERW…RNLE) and 114–217 (QSAS…LGVS). Residues 73 to 82 (GPERPEEPAS) are compositionally biased toward basic and acidic residues. Positions 90 to 116 (GQAQARIRNLEDSLFSLQSQLQLLQSA) form a coiled coil. A phosphoserine mark is found at Ser-139, Ser-158, Ser-167, Ser-170, and Ser-172. Positions 186–198 (RPSTEAIGTSSEA) are enriched in polar residues. Phosphoserine is present on Ser-270. Over residues 297–308 (DVTGESGRDAEA) the composition is skewed to basic and acidic residues. Disordered stretches follow at residues 297–347 (DVTG…PGVE), 374–400 (PQGA…SWEV), and 413–709 (EKGR…YAPA). Thr-311 is modified (phosphothreonine). The span at 315–336 (RLQEQFEAETCRKEEGASRDSL) shows a compositional bias: basic and acidic residues. Phosphoserine occurs at positions 332 and 335. Composition is skewed to basic and acidic residues over residues 413 to 427 (EKGR…REDG), 435 to 452 (TQGR…KDSE), 462 to 484 (DEEK…KGGE), 494 to 531 (LVTE…ESKT), 540 to 561 (IGDK…EKTG), 571 to 582 (EGSKKLLDREAD), 589 to 607 (EVDK…EQGK), and 630 to 647 (DEPR…KQEG). At Ser-451 the chain carries Phosphoserine. At Ser-601 the chain carries Phosphoserine. Ser-721 carries the post-translational modification Phosphoserine. S-palmitoyl cysteine attachment occurs at residues Cys-728 and Cys-730. Cys-731 bears the Cysteine methyl ester mark. Cys-731 carries S-farnesyl cysteine lipidation. The propeptide at 732 to 734 (VVM) is removed in mature form.

Belongs to the paralemmin family. Interacts with SIGIRR. In terms of processing, palmitoylated on Cys-728 and Cys-730 and prenylated on Cys-731; which is required for membrane association.

The protein localises to the cytoplasm. It localises to the cell membrane. Its function is as follows. ATP-binding protein, which may act as a adapter in the Toll-like receptor (TLR) signaling. In Mus musculus (Mouse), this protein is Paralemmin-3 (Palm3).